The chain runs to 89 residues: MRPDIHPEYRQVLFHDLTANTYFLVGSTLKTDRTKLWEDGNTYPYVTLDVSSASHPFYTGKQKQVSKEGQVARFGQRFGQFFNKGKAQS.

The protein belongs to the bacterial ribosomal protein bL31 family. Type B subfamily. As to quaternary structure, part of the 50S ribosomal subunit.

This is Large ribosomal subunit protein bL31B from Aeromonas hydrophila subsp. hydrophila (strain ATCC 7966 / DSM 30187 / BCRC 13018 / CCUG 14551 / JCM 1027 / KCTC 2358 / NCIMB 9240 / NCTC 8049).